A 248-amino-acid chain; its full sequence is NH(3)-dependent NAD(+) synthetase (248 aa).

30 to 37 provides a ligand contact to ATP; the sequence is GLSGGIDS. Asp-36 lines the Mg(2+) pocket. Residue Arg-114 coordinates deamido-NAD(+). ATP is bound at residue Thr-134. Mg(2+) is bound at residue Glu-139. Residues Lys-147 and Asp-154 each contribute to the deamido-NAD(+) site. Lys-163 and Thr-185 together coordinate ATP. Position 232–233 (232–233) interacts with deamido-NAD(+); sequence HK.

Belongs to the NAD synthetase family. In terms of assembly, homodimer.

It carries out the reaction deamido-NAD(+) + NH4(+) + ATP = AMP + diphosphate + NAD(+) + H(+). The protein operates within cofactor biosynthesis; NAD(+) biosynthesis; NAD(+) from deamido-NAD(+) (ammonia route): step 1/1. Catalyzes the ATP-dependent amidation of deamido-NAD to form NAD. Uses ammonia as a nitrogen source. This chain is NH(3)-dependent NAD(+) synthetase, found in Mycoplasma genitalium (strain ATCC 33530 / DSM 19775 / NCTC 10195 / G37) (Mycoplasmoides genitalium).